A 100-amino-acid chain; its full sequence is Urease subunit gamma (100 aa).

It belongs to the urease gamma subunit family. In terms of assembly, heterotrimer of UreA (gamma), UreB (beta) and UreC (alpha) subunits. Three heterotrimers associate to form the active enzyme.

It is found in the cytoplasm. It catalyses the reaction urea + 2 H2O + H(+) = hydrogencarbonate + 2 NH4(+). The protein operates within nitrogen metabolism; urea degradation; CO(2) and NH(3) from urea (urease route): step 1/1. This chain is Urease subunit gamma, found in Acinetobacter baylyi (strain ATCC 33305 / BD413 / ADP1).